Reading from the N-terminus, the 120-residue chain is Large ribosomal subunit protein bL17 (120 aa).

It belongs to the bacterial ribosomal protein bL17 family. Part of the 50S ribosomal subunit. Contacts protein L32.

In Bacillus licheniformis (strain ATCC 14580 / DSM 13 / JCM 2505 / CCUG 7422 / NBRC 12200 / NCIMB 9375 / NCTC 10341 / NRRL NRS-1264 / Gibson 46), this protein is Large ribosomal subunit protein bL17.